Here is an 870-residue protein sequence, read N- to C-terminus: DNA mismatch repair protein MutS (870 aa).

Residue 608–615 (GPNMAGKS) coordinates ATP.

This sequence belongs to the DNA mismatch repair MutS family.

Functionally, this protein is involved in the repair of mismatches in DNA. It is possible that it carries out the mismatch recognition step. This protein has a weak ATPase activity. The polypeptide is DNA mismatch repair protein MutS (Persephonella marina (strain DSM 14350 / EX-H1)).